A 231-amino-acid polypeptide reads, in one-letter code: MAHSKHGLKEEMTMKYHMEGCVNGHKFVITGEGIGYPFKGKQTINLCVIEGGPLPFSEDILSAGFKYGDRIFTEYPQDIVDYFKNSCPAGYTWGRSFLFEDGAVCICNVDITVSVKENCIYHKSIFNGMNFPADGPVMKKMTTNWEASCEKIMPVPKQGILKGDVSMYLLLKDGGRYRCQFDTVYKAKSVPSKMPEWHFIQHKLLREDRSDAKNQKWQLTEHAIAFPSALA.

The residue at position 65 (F65) is a Phenylalanine amide; atypical. The 2-tetrahydro-2-pyridyl-5-imidazolinone (Lys-Gly) cross-link spans 66–68; sequence KYG. Y67 carries the 2,3-didehydrotyrosine modification.

This sequence belongs to the GFP family. As to quaternary structure, homotetramer. Contains a chromophore consisting of modified amino acid residues. The chromophore is formed by autocatalytic backbone condensation between Xaa-N and Gly-(N+2), and oxidation of Tyr-(N+1) to didehydrotyrosine. In addition, the residue N lysine undergoes cyclization. The alpha-amino nitrogen is replaced by the epsilon-amino nitrogen, the peptide chain is broken, residue N-1 is released as an amide, and a double bond is formed between the alpha-carbon and the nitrogen so that a tetrahydropyridine ring results. Maturation of the chromophore requires nothing other than molecular oxygen. In terms of tissue distribution, tentacle and oral disk.

Pigment protein that is yellow in color. The polypeptide is GFP-like fluorescent chromoprotein FP538 (Zoanthus sp. (Green polyp)).